The primary structure comprises 344 residues: L-threonine 3-dehydrogenase (344 aa).

Cys-42 contacts Zn(2+). Catalysis depends on charge relay system residues Thr-44 and His-47. His-67, Glu-68, Cys-97, Cys-100, Cys-103, and Cys-111 together coordinate Zn(2+). Residues Ile-179, Asp-199, Arg-204, 266 to 268 (LGI), and 290 to 291 (IY) each bind NAD(+).

The protein belongs to the zinc-containing alcohol dehydrogenase family. As to quaternary structure, homotetramer. Requires Zn(2+) as cofactor.

It is found in the cytoplasm. The catalysed reaction is L-threonine + NAD(+) = (2S)-2-amino-3-oxobutanoate + NADH + H(+). It participates in amino-acid degradation; L-threonine degradation via oxydo-reductase pathway; glycine from L-threonine: step 1/2. In terms of biological role, catalyzes the NAD(+)-dependent oxidation of L-threonine to 2-amino-3-ketobutyrate. The protein is L-threonine 3-dehydrogenase of Mesorhizobium japonicum (strain LMG 29417 / CECT 9101 / MAFF 303099) (Mesorhizobium loti (strain MAFF 303099)).